The primary structure comprises 278 residues: 4-hydroxy-tetrahydrodipicolinate reductase (278 aa).

Residues 16-21 (GAGGRM) and Glu42 contribute to the NAD(+) site. Position 43 (Arg43) interacts with NADP(+). Residues 106–108 (GTT) and 130–133 (AGNY) each bind NAD(+). The active-site Proton donor/acceptor is His163. His164 is a (S)-2,3,4,5-tetrahydrodipicolinate binding site. Lys167 serves as the catalytic Proton donor. A (S)-2,3,4,5-tetrahydrodipicolinate-binding site is contributed by 173–174 (GT).

Belongs to the DapB family.

It localises to the cytoplasm. The enzyme catalyses (S)-2,3,4,5-tetrahydrodipicolinate + NAD(+) + H2O = (2S,4S)-4-hydroxy-2,3,4,5-tetrahydrodipicolinate + NADH + H(+). The catalysed reaction is (S)-2,3,4,5-tetrahydrodipicolinate + NADP(+) + H2O = (2S,4S)-4-hydroxy-2,3,4,5-tetrahydrodipicolinate + NADPH + H(+). Its pathway is amino-acid biosynthesis; L-lysine biosynthesis via DAP pathway; (S)-tetrahydrodipicolinate from L-aspartate: step 4/4. Catalyzes the conversion of 4-hydroxy-tetrahydrodipicolinate (HTPA) to tetrahydrodipicolinate. This is 4-hydroxy-tetrahydrodipicolinate reductase from Psychrobacter arcticus (strain DSM 17307 / VKM B-2377 / 273-4).